The chain runs to 159 residues: Endoribonuclease YbeY (159 aa).

Positions 120, 124, and 130 each coordinate Zn(2+).

The protein belongs to the endoribonuclease YbeY family. Requires Zn(2+) as cofactor.

It is found in the cytoplasm. Single strand-specific metallo-endoribonuclease involved in late-stage 70S ribosome quality control and in maturation of the 3' terminus of the 16S rRNA. The protein is Endoribonuclease YbeY of Parafrankia sp. (strain EAN1pec).